The primary structure comprises 1212 residues: Histone demethylase UTY (1212 aa).

TPR repeat units follow at residues 88–121 (SDFF…QTDY), 125–158 (AAFL…DPNF), 165–193 (HLRL…IDCN), 200–233 (VEIQ…ESLP), 245–278 (GWMH…DPNS), 279–312 (GQSW…SEAS), 313–346 (ADTW…DHGH), and 347–380 (AAAW…KSCN). Residues 530 to 539 (FTKESKDSRS) show a composition bias toward basic and acidic residues. Residues 530–555 (FTKESKDSRSKSLTSKTSRKDRDTSN) form a disordered region. Thr-752 carries the post-translational modification Phosphothreonine. Residues 865-886 (RRTQVKDYSDNESTCSDNSGRR) are disordered. Residues 907–1070 (KWKLQLHELT…YKLAVERYEW (164 aa)) form the JmjC domain. Positions 958, 960, and 1038 each coordinate Fe cation. Zn(2+) is bound by residues Cys-1143, Cys-1146, Cys-1170, and Cys-1173.

It belongs to the UTX family. Binds TLE1 and TLE2. It depends on L-ascorbate as a cofactor. Fe(2+) serves as cofactor.

The protein localises to the nucleus. It carries out the reaction N(6),N(6),N(6)-trimethyl-L-lysyl(27)-[histone H3] + 2 2-oxoglutarate + 2 O2 = N(6)-methyl-L-lysyl(27)-[histone H3] + 2 formaldehyde + 2 succinate + 2 CO2. Its function is as follows. Male-specific histone demethylase that catalyzes trimethylated 'Lys-27' (H3K27me3) demethylation in histone H3. Has relatively low KDM activity. This is Histone demethylase UTY (Uty) from Mus musculus (Mouse).